The following is a 91-amino-acid chain: Non-hemolytic enterotoxin 105 kDa component (91 aa).

The cofactor is Zn(2+).

Its subcellular location is the secreted. In terms of biological role, this protein is a metalloprotease with gelatinolytic and collagenolytic activity and is a component of the non-hemolytic enterotoxin complex (NHE). This is Non-hemolytic enterotoxin 105 kDa component from Bacillus cereus.